The sequence spans 337 residues: Holliday junction branch migration complex subunit RuvB (337 aa).

Residues 1 to 182 (MSEEKSVLRD…FGAVFRLSYY (182 aa)) form a large ATPase domain (RuvB-L) region. ATP contacts are provided by residues leucine 21, arginine 22, glycine 63, lysine 66, threonine 67, threonine 68, 129–131 (EDY), arginine 172, tyrosine 182, and arginine 219. Threonine 67 serves as a coordination point for Mg(2+). Residues 183–253 (KLEEIKQIVR…ITQLALTKLG (71 aa)) form a small ATPAse domain (RuvB-S) region. The interval 256-337 (HKGLDASDYL…VKYYKGLLDN (82 aa)) is head domain (RuvB-H). DNA-binding residues include arginine 311 and arginine 316.

The protein belongs to the RuvB family. As to quaternary structure, homohexamer. Forms an RuvA(8)-RuvB(12)-Holliday junction (HJ) complex. HJ DNA is sandwiched between 2 RuvA tetramers; dsDNA enters through RuvA and exits via RuvB. An RuvB hexamer assembles on each DNA strand where it exits the tetramer. Each RuvB hexamer is contacted by two RuvA subunits (via domain III) on 2 adjacent RuvB subunits; this complex drives branch migration. In the full resolvosome a probable DNA-RuvA(4)-RuvB(12)-RuvC(2) complex forms which resolves the HJ.

It localises to the cytoplasm. The catalysed reaction is ATP + H2O = ADP + phosphate + H(+). The RuvA-RuvB-RuvC complex processes Holliday junction (HJ) DNA during genetic recombination and DNA repair, while the RuvA-RuvB complex plays an important role in the rescue of blocked DNA replication forks via replication fork reversal (RFR). RuvA specifically binds to HJ cruciform DNA, conferring on it an open structure. The RuvB hexamer acts as an ATP-dependent pump, pulling dsDNA into and through the RuvAB complex. RuvB forms 2 homohexamers on either side of HJ DNA bound by 1 or 2 RuvA tetramers; 4 subunits per hexamer contact DNA at a time. Coordinated motions by a converter formed by DNA-disengaged RuvB subunits stimulates ATP hydrolysis and nucleotide exchange. Immobilization of the converter enables RuvB to convert the ATP-contained energy into a lever motion, pulling 2 nucleotides of DNA out of the RuvA tetramer per ATP hydrolyzed, thus driving DNA branch migration. The RuvB motors rotate together with the DNA substrate, which together with the progressing nucleotide cycle form the mechanistic basis for DNA recombination by continuous HJ branch migration. Branch migration allows RuvC to scan DNA until it finds its consensus sequence, where it cleaves and resolves cruciform DNA. The protein is Holliday junction branch migration complex subunit RuvB of Acholeplasma laidlawii (strain PG-8A).